The primary structure comprises 331 residues: MSVFESETSNFHVYNNHEIQTQPQMQTFLSEEEPVGRQNSILSLTLDEIQMKSGKSFGAMNMDEFLANLWTTVEENDNEGGGAHNDGEKPAVLPRQGSLSLPVPLCKKTVDEVWLEIQNGVQQHPPSSNSGQNSAENIRRQQTLGEITLEDFLVKAGVVQEPLKTTMRMSSSDFGYNPEFGVGLHCQNQNNYGDNRSVYSENRPFYSVLGESSSCMTGNGRSNQYLTGLDAFRIKKRIIDGPPEILMERRQRRMIKNRESAARSRARRQAYTVELELELNNLTEENTKLKEIVEENEKKRRQEIISRSKQVTKEKSGDKLRKIRRMASAGW.

A phosphoserine mark is found at S40 and S98. T143 carries the phosphothreonine modification. In terms of domain architecture, bZIP spans 247–310 (MERRQRRMIK…RQEIISRSKQ (64 aa)). Residues 249–268 (RRQRRMIKNRESAARSRARR) form a basic motif region. A leucine-zipper region spans residues 275–289 (LELELNNLTEENTKL). Positions 296 to 320 (NEKKRRQEIISRSKQVTKEKSGDKL) are enriched in basic and acidic residues. A disordered region spans residues 296–331 (NEKKRRQEIISRSKQVTKEKSGDKLRKIRRMASAGW).

It belongs to the bZIP family. ABI5 subfamily. As to quaternary structure, DNA-binding heterodimer with AREB3/DPBF3 or EEL/DPBF4. Interacts with the AFP proteins AFP1, AFP2 and AFP3. In terms of tissue distribution, predominantly expressed in seeds.

The protein resides in the nucleus. Could participate in abscisic acid-regulated gene expression during seed development. The protein is ABSCISIC ACID-INSENSITIVE 5-like protein 1 (DPBF2) of Arabidopsis thaliana (Mouse-ear cress).